Consider the following 72-residue polypeptide: Bowman-Birk type trypsin inhibitor (72 aa).

7 cysteine pairs are disulfide-bonded: Cys-12–Cys-66, Cys-13–Cys-28, Cys-16–Cys-62, Cys-18–Cys-26, Cys-36–Cys-43, Cys-40–Cys-55, and Cys-45–Cys-53.

This sequence belongs to the Bowman-Birk serine protease inhibitor family.

This chain is Bowman-Birk type trypsin inhibitor, found in Vigna radiata var. radiata (Mung bean).